Here is a 186-residue protein sequence, read N- to C-terminus: Peptidyl-tRNA hydrolase (186 aa).

Position 16 (Tyr-16) interacts with tRNA. His-21 acts as the Proton acceptor in catalysis. The tRNA site is built by Tyr-60 and Asn-62.

It belongs to the PTH family. As to quaternary structure, monomer.

The protein resides in the cytoplasm. It carries out the reaction an N-acyl-L-alpha-aminoacyl-tRNA + H2O = an N-acyl-L-amino acid + a tRNA + H(+). Functionally, hydrolyzes ribosome-free peptidyl-tRNAs (with 1 or more amino acids incorporated), which drop off the ribosome during protein synthesis, or as a result of ribosome stalling. Catalyzes the release of premature peptidyl moieties from peptidyl-tRNA molecules trapped in stalled 50S ribosomal subunits, and thus maintains levels of free tRNAs and 50S ribosomes. In Tropheryma whipplei (strain Twist) (Whipple's bacillus), this protein is Peptidyl-tRNA hydrolase.